The primary structure comprises 145 residues: uncharacterized protein (145 aa).

Residues 1-41 (MEQHYHQQNQLRQLKQQQLKELLQQQSKDKEEDEQKHDDYR) are a coiled coil. Residues 1–91 (MEQHYHQQNQ…LQISEPEGES (91 aa)) are disordered. The span at 7-26 (QQNQLRQLKQQQLKELLQQQ) shows a compositional bias: low complexity. The segment covering 27 to 42 (SKDKEEDEQKHDDYRS) has biased composition (basic and acidic residues). A compositionally biased stretch (low complexity) spans 43-58 (PTKTTTTTATSTSAAT).

This is an uncharacterized protein from Dictyostelium discoideum (Social amoeba).